The sequence spans 132 residues: Fatty acid-binding protein, brain (132 aa).

Position 2 is an N-acetylvaline (V2). 127-129 (RCY) provides a ligand contact to a fatty acid.

It belongs to the calycin superfamily. Fatty-acid binding protein (FABP) family. As to expression, expressed in brain and other neural tissues.

The protein localises to the cytoplasm. Its function is as follows. B-FABP could be involved in the transport of a so far unknown hydrophobic ligand with potential morphogenic activity during CNS development. It is required for the establishment of the radial glial fiber system in developing brain, a system that is necessary for the migration of immature neurons to establish cortical layers. The sequence is that of Fatty acid-binding protein, brain (Fabp7) from Mus musculus (Mouse).